A 583-amino-acid polypeptide reads, in one-letter code: Phosphoglucomutase, cytoplasmic (583 aa).

Residues 1–20 (MATFKVSRVETKPYDGQKPG) form a disordered region. Residues Arg-25 and Ser-124 each coordinate alpha-D-glucose 1,6-bisphosphate. Ser-124 functions as the Phosphoserine intermediate in the catalytic mechanism. 4 residues coordinate Mg(2+): Ser-124, Asp-300, Asp-302, and Asp-304. The residue at position 124 (Ser-124) is a Phosphoserine. Residues Asp-304, Arg-305, Thr-368, Glu-387, Ser-389, and Lys-400 each contribute to the alpha-D-glucose 1,6-bisphosphate site.

It belongs to the phosphohexose mutase family. In terms of assembly, monomer. It depends on Mg(2+) as a cofactor.

The protein localises to the cytoplasm. The enzyme catalyses alpha-D-glucose 1-phosphate = alpha-D-glucose 6-phosphate. The catalysed reaction is O-phospho-L-seryl-[protein] + alpha-D-glucose 1-phosphate = alpha-D-glucose 1,6-bisphosphate + L-seryl-[protein]. It catalyses the reaction alpha-D-glucose 1,6-bisphosphate + L-seryl-[protein] = O-phospho-L-seryl-[protein] + alpha-D-glucose 6-phosphate. Its function is as follows. Catalyzes the reversible isomerization of alpha-D-glucose 1-phosphate to alpha-D-glucose 6-phosphate. The mechanism proceeds via the intermediate compound alpha-D-glucose 1,6-bisphosphate. This enzyme participates in both the breakdown and synthesis of glucose. This is Phosphoglucomutase, cytoplasmic (PGM1) from Mesembryanthemum crystallinum (Common ice plant).